The chain runs to 173 residues: Ribosome maturation factor RimM (173 aa).

The region spanning Val94 to Phe166 is the PRC barrel domain.

The protein belongs to the RimM family. As to quaternary structure, binds ribosomal protein uS19.

The protein localises to the cytoplasm. In terms of biological role, an accessory protein needed during the final step in the assembly of 30S ribosomal subunit, possibly for assembly of the head region. Essential for efficient processing of 16S rRNA. May be needed both before and after RbfA during the maturation of 16S rRNA. It has affinity for free ribosomal 30S subunits but not for 70S ribosomes. This is Ribosome maturation factor RimM from Amoebophilus asiaticus (strain 5a2).